Here is a 125-residue protein sequence, read N- to C-terminus: uncharacterized protein (125 aa).

A disordered region spans residues E36–Q57. Residues I92 to I112 form a helical membrane-spanning segment.

It is found in the membrane. This is an uncharacterized protein from Mycoplasma pneumoniae (strain ATCC 29342 / M129 / Subtype 1) (Mycoplasmoides pneumoniae).